We begin with the raw amino-acid sequence, 341 residues long: Cyclic GMP-AMP synthase (341 aa).

ATP is bound at residue S56. Catalysis depends on residues D71 and D73. D73 provides a ligand contact to Mg(2+). Residue N109 coordinates ATP. The active site involves D123. D123 contributes to the Mg(2+) binding site. ATP contacts are provided by L192 and D238.

This sequence belongs to the CD-NTase family. B04 subfamily. In terms of assembly, monomer. Mg(2+) serves as cofactor.

The enzyme catalyses GTP + ATP = 3',3'-cGAMP + 2 diphosphate. Cyclic nucleotide synthase (second messenger synthase) of a CBASS antivirus system. CBASS (cyclic oligonucleotide-based antiphage signaling system) provides immunity against bacteriophage. The CD-NTase protein synthesizes cyclic nucleotides in response to infection; these serve as specific second messenger signals. The signals activate a diverse range of effectors, leading to bacterial cell death and thus abortive phage infection. A type II-A(GA) CBASS system. Functionally, catalyzes the synthesis of 3'3'-cyclic GMP-AMP (3'3'-cGAMP) from GTP and ATP, a second messenger in cell signal transduction. May make another product. Controls the activity of the CBASS cGAMP-activated phospholipase effector protein. The sequence is that of Cyclic GMP-AMP synthase from Bacteroides fragilis.